The following is a 372-amino-acid chain: MKYDLIIIGSGSVGAAAGYYATRAGLNVLMTDAHMPPHQHGSHHGDTRLIRHAYGEGEKYVPLVLRAQMLWDELSRHNEDDPIFVRSGVINLGPADSAFLANVAHSAEQWQLNVEQLDAQGIMARWPEIRVPDNYIGLFETDSGFLRSELAIKTWIQLAKEAGCAQLFNCPVTEIRHDDDGVTIETADGEYQAKKAIVCAGTWVKDLLPELPVQPVRKVFAWYQADGRYSVKNKFPAFTGELPNGDQYYGFPAENDALKIGKHNGGQVIHSADERVPFAEVVSDGSEAFPFLRNVLPGIGCCLYGAACTYDNSPDEDFIIDTLPAHDNTLLITGLSGHGFKFASVLGEIAADFAQDKKSDFDLTPFRLSRFQ.

Residue 4 to 34 coordinates FAD; that stretch reads DLIIIGSGSVGAAAGYYATRAGLNVLMTDAH. Cysteine 308 is subject to S-8alpha-FAD cysteine.

It belongs to the MSOX/MTOX family. MTOX subfamily. As to quaternary structure, monomer. FAD serves as cofactor.

The enzyme catalyses N(alpha)-methyl-L-tryptophan + O2 + H2O = L-tryptophan + formaldehyde + H2O2. In terms of biological role, catalyzes the oxidative demethylation of N-methyl-L-tryptophan. The polypeptide is N-methyl-L-tryptophan oxidase (Escherichia coli (strain SMS-3-5 / SECEC)).